We begin with the raw amino-acid sequence, 1728 residues long: MYNRCCRKVWIQGRVAYRPAYIRQSPPQQTLYRGIDLLPFTTIVMDHQSGFQNPSPSGGLMFSASAKRFISRIVGFVGRGAEVQQKAVGLCPLKTERRRAAAGGLLLPTGLRMGRSIIMSVRPLPFLTGPAPSPDTAAGFKPSPPTGNLVSVSPLSKAQMALWFDYLQHPTSTHYFLTLKVELDKQPLSLDKIIQVIRGLGKQHAMLRTTFHVDTDTDDMSKSYMAVHDDSWDQEIHVLMNDAQLYEALRKPFQLSSESPVRWVVQMKLQPGSARSTYTVYAAGHHIGVDGASMSVLSNQLLEAVASEVEDQPDHSGPHYGDYIQRQARYLRSSAGAAAGRFWLSQLRHTQPFRWRMEPPEEINTPNYRQLDTWNFFPTAEIQEWGNLYKTSWFRVATSIVGLVTAAMAEPQAHHDHALMVAFGARPRGFENNVSHMANTMPVKFPLSSLLRDDATFSDAVKAMGRNVSTAKKHENFPFMSLMEQANRHMDPTLLDFKVAITYSPKLANKSCELFPVEGIWDLFFCFLEQEDGVALGVISNPRVFGAEALGQLQSLFNEVFALSKARPSFKLSDLAFLQNRTPARFISGPALDDVESISKSRVYRLIKARAASQPDLVALMSAEKGVQMTYRELAAQSSQVAHFLQKQRLCKGDAVLVHLERGFAQIVWILGVMEAGACYVALDKTWPAARKEAILRTANGKLLVTDDEQMDFEKQDTTVVFLAPSAAEIASMPQSTCECEVADDDLAYVVFTSGSTGQPKGVMVEHSNLSHYVSATRSLVKTGPHSRMLQLASFAFDAIVLEYAVTLAHGGTLCFANHPEVLVGEYLADVIDSNQVNFFHCTPSVLSTLPAGRRLPSLRIVSVGGEASPPGLLDHWRKRVELLHAYGPTECTVICTLESLTQDESTQTAIDATVIGKALPNLDIRICEEGKLEPLAPNQVGEICVVGPQVSRGYMGQEELTASKFHNITLADGHPSRLYRTGDKGFIDDDGKLHIQGRIGNREIKVRGYRLDLYEVEKNVMAFDPEVTQVSIQQVGESLVALVVPASIDCDRIRSKLLKDMPRYAVPTRFIRVASLPLNTNGKIDHTQASSLAAELVMHDTVLPTVDATPTPTAAVRAVGVTEENLRLKTKENGMERQEMLRRHLTAEVTALWAKLLGSSRQFDPEVGFFDAGGHSLLLTQLHKLIKERFGTGSRPSLLDIFSMSSIRKQVDCLMGIVDQDAMLGSEPTGGSSSRSQSRRSAETSSSSTSAPSSVPVDAERNLYAIVGISCRFPGANTAEQLWNVLMEQRDAITTFCPAENLGFALEENSVFVPRYGMIDALKDFEPSAYSMSDAEAQTIDPQKRVFLDVAADALADAGTSASPGNPLDPVGVFVGAATNTFLSSRDNPGSKPPGDEEPQSFANHYQQLLDCPIGTFASFKLNLTGPVVTLNTACSSALAALHLACASLSHGDCNAAVVGGVSMAYPQEGGYVTARPGGDSSAVFSPSGVCHPLDSRADGCVPADGAAALVIKRLADARADGCRVYAVIEGVAVSADGSDDKAGLGVPSSSGQSRTVEAALRRAGPQALSRLRYVEMHGSGTPWGDALEVQGLKMAFDRLSKTGAAEQSGTGRAQPEADRIYLGSNKGNCGNTEAASGLLSLIKASMALNLGVVPPLPNLAEPNPKCEFEETKFEPLGKQLALAPGDRVMNKRQRIVRSPNWISDATWFVISTVDNLLPKLTPAAVA.

Residues 153–499 (SPLSKAQMAL…MDPTLLDFKV (347 aa)) are condensation (C) domain. Residues 608–1002 (KARAASQPDL…KLHIQGRIGN (395 aa)) are adenylation (A) domain. A Carrier domain is found at 1141-1219 (MLRRHLTAEV…KQVDCLMGIV (79 aa)). O-(pantetheine 4'-phosphoryl)serine is present on Ser-1177. Positions 1225-1256 (LGSEPTGGSSSRSQSRRSAETSSSSTSAPSSV) are disordered. Low complexity-rich tracts occupy residues 1226–1237 (GSEPTGGSSSRS) and 1244–1255 (ETSSSSTSAPSS). Residues 1262-1714 (RNLYAIVGIS…SDATWFVIST (453 aa)) form the Ketosynthase family 3 (KS3) domain. Catalysis depends on for beta-ketoacyl synthase activity residues Cys-1436, His-1579, and Asn-1633.

In the N-terminal section; belongs to the NRP synthetase family. The cofactor is pantetheine 4'-phosphate.

The enzyme catalyses acetoacetyl-CoA + L-isoleucine + ATP = tenuazonic acid + AMP + diphosphate + CoA + 2 H(+). In terms of biological role, hybrid PKS-NRPS synthetase that mediates the biosynthesis of the toxin tenuazonic acid (TeA), an inhibitor of protein biosynthesis on ribosomes by suppressing the release of new protein. TAS1 alone is sufficient for TeA synthesis via the condensation of isoleucine (Ile) with acetoacetyl-CoA by the N-terminal NRPS module and subsequent cyclization conducted by the C-terminal KS domain. This Pyricularia oryzae (strain 70-15 / ATCC MYA-4617 / FGSC 8958) (Rice blast fungus) protein is Hybrid PKS-NRPS synthetase TAS1.